A 114-amino-acid polypeptide reads, in one-letter code: Large ribosomal subunit protein uL18 (114 aa).

This sequence belongs to the universal ribosomal protein uL18 family. In terms of assembly, part of the 50S ribosomal subunit; part of the 5S rRNA/L5/L18/L25 subcomplex. Contacts the 5S and 23S rRNAs.

In terms of biological role, this is one of the proteins that bind and probably mediate the attachment of the 5S RNA into the large ribosomal subunit, where it forms part of the central protuberance. In Azobacteroides pseudotrichonymphae genomovar. CFP2, this protein is Large ribosomal subunit protein uL18.